Here is a 95-residue protein sequence, read N- to C-terminus: ESAT-6-like protein EsxH (95 aa).

This sequence belongs to the WXG100 family. ESAT-6 subfamily. Forms a tight 1:1 complex with EsxG.

The protein resides in the secreted. This is ESAT-6-like protein EsxH from Mycolicibacterium smegmatis (strain ATCC 700084 / mc(2)155) (Mycobacterium smegmatis).